The primary structure comprises 410 residues: Chlorobenzene dioxygenase, ferredoxin reductase component (410 aa).

4 to 35 (HVAIIGNGVAGFTTAQALRAEGFEGRISLIGN) serves as a coordination point for FAD. Residue 145–173 (RLVIAGGGLIGCEVATTARKLGLAVTILE) participates in NAD(+) binding.

The protein belongs to the bacterial ring-hydroxylating dioxygenase ferredoxin reductase family. This dioxygenase system consists of four proteins: the two subunits of the oxygenase component (TecA1 and TecA2), a ferredoxin (TecA3) and a ferredoxin reductase (TecA4). FAD serves as cofactor.

The catalysed reaction is 2 reduced [2Fe-2S]-[ferredoxin] + NAD(+) + H(+) = 2 oxidized [2Fe-2S]-[ferredoxin] + NADH. Its pathway is aromatic compound metabolism. Its function is as follows. Part of the chlorobenzene dioxygenase system that catalyzes the dihydroxylation of a range of aromatic compounds, including chlorinated benzenes and toluenes, and dinuclear aromatics such as biphenyl and dibenzo-p-dioxin. This Cupriavidus sp. (strain PS12) protein is Chlorobenzene dioxygenase, ferredoxin reductase component.